The following is a 388-amino-acid chain: MSDEASATTSYEKFLTPEEPFPFLGAPRGVGTCPSEEPGCLDISDFGCQLSSCHRTDPLHRFHTNRWNLTSCGTSVASSECSEELFSSVSVGDQDDCYSLLDDQDFTSFDLFPEGSVCSDVSSSISTYWDWSDSEFEWQLPGSDIASGSDVLSDVIPSIPSSPCLVSKKKNKHRNLDELAWSAMTNDEQVEYIEYLSRKVSTEMGLREQLDIIKIIDPSAQISPTDSEFIIELNCLTDEKLKQVRNYIKEHSLRQRPTREAWKRSNFSCASTSGVSGASASASSSSASMVSSASSSGSSVGNSASNSSANMSRAHSDSNLSASAAERIRDSKKRSKQRKLQQKAFRKRQLKEQRQARKERLSGLFLNEEVLSLKVTEEDHEADVDVLM.

The segment covering 288–312 (SMVSSASSSGSSVGNSASNSSANMS) has biased composition (low complexity). Residues 288-358 (SMVSSASSSG…QLKEQRQARK (71 aa)) are disordered. A phosphoserine mark is found at Ser-316 and Ser-321. Residues 330–349 (DSKKRSKQRKLQQKAFRKRQ) show a composition bias toward basic residues.

The protein belongs to the FAM199 family.

In Mus musculus (Mouse), this protein is Protein FAM199X (Fam199x).